The following is a 600-amino-acid chain: Chaperonin 60 subunit beta 1, chloroplastic (600 aa).

A compositionally biased stretch (polar residues) spans methionine 1–glycine 12. The tract at residues methionine 1–aspartate 23 is disordered. A chloroplast-targeting transit peptide spans methionine 1 to cysteine 54. A phosphoserine mark is found at serine 101 and serine 478.

The protein belongs to the chaperonin (HSP60) family. Part of the Cpn60 complex composed of 7 alpha and 7 beta subunits. Can also form a complex composed of 14 beta subunits only. Both complexes show ATPase activity. The Cpn60 complex interacts with the Cpn10 complex. Interacts with RAB during heat stress. In terms of tissue distribution, expressed in leaves, stems, petioles and flowers.

Its subcellular location is the plastid. The protein localises to the chloroplast stroma. Binds RuBisCO small and large subunits and is implicated in the assembly of the enzyme oligomer. Involved in protein assisted folding. Required for proper plastid division. This is Chaperonin 60 subunit beta 1, chloroplastic (CPN60B1) from Arabidopsis thaliana (Mouse-ear cress).